Consider the following 399-residue polypeptide: Nicotinate phosphoribosyltransferase (399 aa).

The residue at position 217 (His-217) is a Phosphohistidine; by autocatalysis.

The protein belongs to the NAPRTase family. Post-translationally, transiently phosphorylated on a His residue during the reaction cycle. Phosphorylation strongly increases the affinity for substrates and increases the rate of nicotinate D-ribonucleotide production. Dephosphorylation regenerates the low-affinity form of the enzyme, leading to product release.

The enzyme catalyses nicotinate + 5-phospho-alpha-D-ribose 1-diphosphate + ATP + H2O = nicotinate beta-D-ribonucleotide + ADP + phosphate + diphosphate. The protein operates within cofactor biosynthesis; NAD(+) biosynthesis; nicotinate D-ribonucleotide from nicotinate: step 1/1. Its function is as follows. Catalyzes the synthesis of beta-nicotinate D-ribonucleotide from nicotinate and 5-phospho-D-ribose 1-phosphate at the expense of ATP. The polypeptide is Nicotinate phosphoribosyltransferase (Burkholderia orbicola (strain MC0-3)).